Consider the following 362-residue polypeptide: Porin Omp2b (362 aa).

A signal peptide spans 1-22 (MNIKSLLLGSAAALVAASGAQA).

This sequence belongs to the alphaproteobacteria porin family. Homotrimer.

Its subcellular location is the cell outer membrane. Functionally, forms passive diffusion pores that allow small molecular weight hydrophilic materials across the outer membrane. The chain is Porin Omp2b (omp2b) from Brucella melitensis biotype 1 (strain ATCC 23456 / CCUG 17765 / NCTC 10094 / 16M).